The sequence spans 277 residues: Thiazole synthase (277 aa).

Lysine 119 (schiff-base intermediate with DXP) is an active-site residue. Residues glycine 180, 206–207, and 228–229 contribute to the 1-deoxy-D-xylulose 5-phosphate site; these read AG and NT.

Belongs to the ThiG family. In terms of assembly, homotetramer. Forms heterodimers with either ThiH or ThiS.

The protein localises to the plastid. It localises to the chloroplast. It catalyses the reaction [ThiS sulfur-carrier protein]-C-terminal-Gly-aminoethanethioate + 2-iminoacetate + 1-deoxy-D-xylulose 5-phosphate = [ThiS sulfur-carrier protein]-C-terminal Gly-Gly + 2-[(2R,5Z)-2-carboxy-4-methylthiazol-5(2H)-ylidene]ethyl phosphate + 2 H2O + H(+). It participates in cofactor biosynthesis; thiamine diphosphate biosynthesis. Functionally, catalyzes the rearrangement of 1-deoxy-D-xylulose 5-phosphate (DXP) to produce the thiazole phosphate moiety of thiamine. Sulfur is provided by the thiocarboxylate moiety of the carrier protein ThiS. In vitro, sulfur can be provided by H(2)S. In Porphyra purpurea (Red seaweed), this protein is Thiazole synthase.